The chain runs to 314 residues: GTPase Era (314 aa).

Positions 21-189 constitute an Era-type G domain; the sequence is KSGFVGIIGR…QNTLIEQLEP (169 aa). Residues 29–36 are G1; that stretch reads GRPNVGKS. 29 to 36 is a GTP binding site; the sequence is GRPNVGKS. The tract at residues 55 to 59 is G2; that stretch reads QTTRN. The G3 stretch occupies residues 76–79; that stretch reads DTPG. GTP is bound by residues 76 to 80 and 138 to 141; these read DTPGI and NKSD. The interval 138–141 is G4; it reads NKSD. The interval 168-170 is G5; the sequence is FSA. One can recognise a KH type-2 domain in the interval 212-296; that stretch reads IREQILQLTR…FLKLFVKVEP (85 aa).

This sequence belongs to the TRAFAC class TrmE-Era-EngA-EngB-Septin-like GTPase superfamily. Era GTPase family. Monomer.

The protein resides in the cytoplasm. It is found in the cell inner membrane. An essential GTPase that binds both GDP and GTP, with rapid nucleotide exchange. Plays a role in 16S rRNA processing and 30S ribosomal subunit biogenesis and possibly also in cell cycle regulation and energy metabolism. This Crocosphaera subtropica (strain ATCC 51142 / BH68) (Cyanothece sp. (strain ATCC 51142)) protein is GTPase Era.